Here is a 255-residue protein sequence, read N- to C-terminus: 1-(5-phosphoribosyl)-5-[(5-phosphoribosylamino)methylideneamino] imidazole-4-carboxamide isomerase (255 aa).

Residue Asp8 is the Proton acceptor of the active site. The active-site Proton donor is Asp129.

It belongs to the HisA/HisF family.

It localises to the cytoplasm. It carries out the reaction 1-(5-phospho-beta-D-ribosyl)-5-[(5-phospho-beta-D-ribosylamino)methylideneamino]imidazole-4-carboxamide = 5-[(5-phospho-1-deoxy-D-ribulos-1-ylimino)methylamino]-1-(5-phospho-beta-D-ribosyl)imidazole-4-carboxamide. It functions in the pathway amino-acid biosynthesis; L-histidine biosynthesis; L-histidine from 5-phospho-alpha-D-ribose 1-diphosphate: step 4/9. This Synechococcus sp. (strain CC9605) protein is 1-(5-phosphoribosyl)-5-[(5-phosphoribosylamino)methylideneamino] imidazole-4-carboxamide isomerase.